A 159-amino-acid chain; its full sequence is GDP-mannose mannosyl hydrolase (159 aa).

Substrate-binding positions include 2–3 (FL), F8, and R36. The region spanning 13–153 (RSTPLVSLDF…SRAYFLAEKR (141 aa)) is the Nudix hydrolase domain. Residues G49, E69, and Q122 each coordinate Mg(2+). Residues 50–71 (GRVQKDETLEAAFERLTMAELG) carry the Nudix box motif.

The protein belongs to the Nudix hydrolase family. Homodimer. Requires Mg(2+) as cofactor.

It carries out the reaction GDP-alpha-D-mannose + H2O = D-mannose + GDP + H(+). Functionally, hydrolyzes GDP-mannose. The protein is GDP-mannose mannosyl hydrolase of Escherichia coli O157:H7.